The chain runs to 343 residues: 3-dehydroquinate synthase (343 aa).

Residues 86-90 (GALLD), 110-111 (TT), K123, and K132 contribute to the NAD(+) site. 3 residues coordinate Zn(2+): E165, H229, and H243.

This sequence belongs to the sugar phosphate cyclases superfamily. Dehydroquinate synthase family. Co(2+) serves as cofactor. Requires Zn(2+) as cofactor. NAD(+) is required as a cofactor.

Its subcellular location is the cytoplasm. The catalysed reaction is 7-phospho-2-dehydro-3-deoxy-D-arabino-heptonate = 3-dehydroquinate + phosphate. It participates in metabolic intermediate biosynthesis; chorismate biosynthesis; chorismate from D-erythrose 4-phosphate and phosphoenolpyruvate: step 2/7. Its function is as follows. Catalyzes the conversion of 3-deoxy-D-arabino-heptulosonate 7-phosphate (DAHP) to dehydroquinate (DHQ). In Pyrobaculum islandicum (strain DSM 4184 / JCM 9189 / GEO3), this protein is 3-dehydroquinate synthase.